We begin with the raw amino-acid sequence, 88 residues long: Beta-insect excitatory toxin LqhIT1b (88 aa).

A signal peptide spans 1 to 18; the sequence is MKFFLLFLVVLPIMGVLG. The 64-residue stretch at 20–83 folds into the LCN-type CS-alpha/beta domain; sequence KNGYAVDSKG…ISDTTKKYCD (64 aa). 4 disulfides stabilise this stretch: cysteine 34-cysteine 55, cysteine 40-cysteine 60, cysteine 44-cysteine 62, and cysteine 56-cysteine 82.

The protein belongs to the long (4 C-C) scorpion toxin superfamily. Sodium channel inhibitor family. Beta subfamily. In terms of tissue distribution, expressed by the venom gland.

Its subcellular location is the secreted. Functionally, excitatory insect toxins induce a spastic paralysis. They bind voltage-independently at site-4 of sodium channels (Nav) and shift the voltage of activation toward more negative potentials thereby affecting sodium channel activation and promoting spontaneous and repetitive firing. The polypeptide is Beta-insect excitatory toxin LqhIT1b (Leiurus hebraeus (Hebrew deathstalker scorpion)).